Consider the following 1021-residue polypeptide: Immunoglobulin superfamily member 2 (1021 aa).

Positions 1 to 20 (MAGISYVASFFLLLTKLSIG) are cleaved as a signal peptide. Residues 21 to 954 (QREVTVQKGP…LPSRICSSAP (934 aa)) lie on the Extracellular side of the membrane. 7 Ig-like C2-type domains span residues 22–139 (REVT…AKTN), 144–265 (PDTL…WMFI), 279–389 (PAVK…RTGS), 408–525 (PAAR…RDLS), 541–651 (LQVS…NSLY), 656–794 (PRAS…WHKL), and 808–925 (PTGS…KWIN). Cystine bridges form between C43/C121 and C168/C249. N44 carries an N-linked (GlcNAc...) asparagine glycan. The EWI motif signature appears at 253-255 (EWI). 5 cysteine pairs are disulfide-bonded: C304-C377, C434-C511, C562-C640, C697-C778, and C834-C909. N-linked (GlcNAc...) asparagine glycosylation is present at N322. The helical transmembrane segment at 955–975 (LLYFLFICPFVLLLLLLISLL) threads the bilayer. The Cytoplasmic segment spans residues 976-1021 (CLYWKARKLSTLRSNTRKEKALWVDLKEAGGVTTNRREDEEEDEGN).

N-glycosylated. Expressed in lung, thymus and small intestine. Detected in cutaneous dendritic cells, activated T-cells, monocytes and granulocytes as well as with epithelial cells with dendritic morphology. Expressed in some leukemic cells, the CD4(+) CD56(+) blastic tumor cells, as well as in Langerhans cells from LCH (Langerhans cell histiocytosis) patients.

It localises to the membrane. Functionally, plays a role as inhibitor of T-cells proliferation induced by CD3. Inhibits expression of IL2RA on activated T-cells and secretion of IL2. Inhibits tyrosine kinases that are required for IL2 production and cellular proliferation. Inhibits phospholipase C-gamma-1/PLCG1 phosphorylation and subsequent CD3-induced changes in intracellular free calcium. Prevents nuclear translocation of nuclear factor of activated T-cell to the nucleus. Plays a role in the inhibition of T-cell proliferation via IL10 secretion by cutaneous dendritic cells. May be a marker of CD4(+) CD56(+) leukemic tumor cells. This Homo sapiens (Human) protein is Immunoglobulin superfamily member 2 (CD101).